Consider the following 300-residue polypeptide: 2-oxoglutarate-dependent dioxygenase DAO (300 aa).

Positions W149–P252 constitute a Fe2OG dioxygenase domain. 3 residues coordinate Fe cation: H173, D175, and H232. R242 contacts 2-oxoglutarate.

This sequence belongs to the iron/ascorbate-dependent oxidoreductase family. Fe(2+) serves as cofactor.

Functionally, 2-oxoglutarate-dependent dioxygenase essential for auxin catabolism and maintenance of auxin homeostasis in reproductive organs. Catalyzes the irreversible oxidation of indole-3-acetic acid (IAA) to the biologically inactive 2-oxoindole-3-acetic acid (OxIAA). In Oryza sativa subsp. indica (Rice), this protein is 2-oxoglutarate-dependent dioxygenase DAO (DAO).